The sequence spans 392 residues: Phosphoglycerate kinase (392 aa).

Residues 21 to 23 (DFN), R36, 59 to 62 (HLGR), R113, and R146 contribute to the substrate site. ATP is bound by residues K197, E319, and 345–348 (GGDT).

This sequence belongs to the phosphoglycerate kinase family. In terms of assembly, monomer.

It localises to the cytoplasm. It carries out the reaction (2R)-3-phosphoglycerate + ATP = (2R)-3-phospho-glyceroyl phosphate + ADP. Its pathway is carbohydrate degradation; glycolysis; pyruvate from D-glyceraldehyde 3-phosphate: step 2/5. In Francisella philomiragia subsp. philomiragia (strain ATCC 25017 / CCUG 19701 / FSC 153 / O#319-036), this protein is Phosphoglycerate kinase.